The sequence spans 182 residues: Inosine/xanthosine triphosphatase (182 aa).

Residues Asp-38 and Glu-68 each coordinate Mg(2+). Residue 68 to 69 coordinates substrate; the sequence is EA.

The protein belongs to the YjjX NTPase family. As to quaternary structure, homodimer. It depends on Mg(2+) as a cofactor. Mn(2+) is required as a cofactor.

It carries out the reaction XTP + H2O = XDP + phosphate + H(+). The enzyme catalyses ITP + H2O = IDP + phosphate + H(+). Phosphatase that hydrolyzes non-canonical purine nucleotides such as XTP and ITP to their respective diphosphate derivatives. Probably excludes non-canonical purines from DNA/RNA precursor pool, thus preventing their incorporation into DNA/RNA and avoiding chromosomal lesions. This is Inosine/xanthosine triphosphatase from Erwinia tasmaniensis (strain DSM 17950 / CFBP 7177 / CIP 109463 / NCPPB 4357 / Et1/99).